Consider the following 205-residue polypeptide: Ribosomal RNA small subunit methyltransferase G (205 aa).

S-adenosyl-L-methionine is bound by residues glycine 73, leucine 78, 124–125, and arginine 139; that span reads VE.

Belongs to the methyltransferase superfamily. RNA methyltransferase RsmG family.

Its subcellular location is the cytoplasm. It catalyses the reaction guanosine(527) in 16S rRNA + S-adenosyl-L-methionine = N(7)-methylguanosine(527) in 16S rRNA + S-adenosyl-L-homocysteine. Its function is as follows. Specifically methylates the N7 position of guanine in position 527 of 16S rRNA. The polypeptide is Ribosomal RNA small subunit methyltransferase G (Methylobacillus flagellatus (strain ATCC 51484 / DSM 6875 / VKM B-1610 / KT)).